The sequence spans 74 residues: Small ribosomal subunit protein bS18 (74 aa).

The protein belongs to the bacterial ribosomal protein bS18 family. Part of the 30S ribosomal subunit. Forms a tight heterodimer with protein bS6.

In terms of biological role, binds as a heterodimer with protein bS6 to the central domain of the 16S rRNA, where it helps stabilize the platform of the 30S subunit. The polypeptide is Small ribosomal subunit protein bS18 (Rhizorhabdus wittichii (strain DSM 6014 / CCUG 31198 / JCM 15750 / NBRC 105917 / EY 4224 / RW1) (Sphingomonas wittichii)).